Reading from the N-terminus, the 330-residue chain is Biotin synthase (330 aa).

One can recognise a Radical SAM core domain in the interval 55–282; it reads NAVQRSTLLS…TAYVRLSAGR (228 aa). [4Fe-4S] cluster contacts are provided by C70, C74, and C77. C114, C145, C205, and R277 together coordinate [2Fe-2S] cluster.

Belongs to the radical SAM superfamily. Biotin synthase family. Homodimer. Requires [4Fe-4S] cluster as cofactor. [2Fe-2S] cluster serves as cofactor.

It carries out the reaction (4R,5S)-dethiobiotin + (sulfur carrier)-SH + 2 reduced [2Fe-2S]-[ferredoxin] + 2 S-adenosyl-L-methionine = (sulfur carrier)-H + biotin + 2 5'-deoxyadenosine + 2 L-methionine + 2 oxidized [2Fe-2S]-[ferredoxin]. It participates in cofactor biosynthesis; biotin biosynthesis; biotin from 7,8-diaminononanoate: step 2/2. Its function is as follows. Catalyzes the conversion of dethiobiotin (DTB) to biotin by the insertion of a sulfur atom into dethiobiotin via a radical-based mechanism. The chain is Biotin synthase from Methylibium petroleiphilum (strain ATCC BAA-1232 / LMG 22953 / PM1).